The sequence spans 114 residues: NADH-quinone oxidoreductase subunit K 2 (114 aa).

A run of 3 helical transmembrane segments spans residues 1–21 (MIVP…LGVF), 29–49 (LIMI…AFIG), and 62–82 (FVLF…AIIV).

This sequence belongs to the complex I subunit 4L family. In terms of assembly, NDH-1 is composed of 14 different subunits. Subunits NuoA, H, J, K, L, M, N constitute the membrane sector of the complex.

It localises to the cell inner membrane. It catalyses the reaction a quinone + NADH + 5 H(+)(in) = a quinol + NAD(+) + 4 H(+)(out). Functionally, NDH-1 shuttles electrons from NADH, via FMN and iron-sulfur (Fe-S) centers, to quinones in the respiratory chain. The immediate electron acceptor for the enzyme in this species is believed to be ubiquinone. Couples the redox reaction to proton translocation (for every two electrons transferred, four hydrogen ions are translocated across the cytoplasmic membrane), and thus conserves the redox energy in a proton gradient. In Syntrophobacter fumaroxidans (strain DSM 10017 / MPOB), this protein is NADH-quinone oxidoreductase subunit K 2.